Here is a 699-residue protein sequence, read N- to C-terminus: Elongation factor G (699 aa).

The region spanning 8 to 283 (EHIRNIGICA…AVVYFLPSPI (276 aa)) is the tr-type G domain. GTP contacts are provided by residues 17-24 (AHIDAGKT), 81-85 (DTPGH), and 135-138 (NKMD).

This sequence belongs to the TRAFAC class translation factor GTPase superfamily. Classic translation factor GTPase family. EF-G/EF-2 subfamily.

The protein localises to the cytoplasm. In terms of biological role, catalyzes the GTP-dependent ribosomal translocation step during translation elongation. During this step, the ribosome changes from the pre-translocational (PRE) to the post-translocational (POST) state as the newly formed A-site-bound peptidyl-tRNA and P-site-bound deacylated tRNA move to the P and E sites, respectively. Catalyzes the coordinated movement of the two tRNA molecules, the mRNA and conformational changes in the ribosome. In Rickettsia akari (strain Hartford), this protein is Elongation factor G.